Consider the following 209-residue polypeptide: MSGKKRTASSTRWMQEHFDDHYVKLSQKRGLRSRAAFKIEEIQQKDKLIRPGMTVVDLGAAPGGWSQIAVKLAGETGKVIACDILPMDPIVGVDFLQGDFREEKVLNALLERVGDAKVDVVLSDMAPNMSGTGGVDQPRAMYLVELALDMCHQVLAPNGSFAVKVFQGEGFDEYMKAVREAFTTVKTRKPDSSRPRSREVYLVATGYKL.

Residues Gly63, Trp65, Asp83, Asp99, and Asp124 each contribute to the S-adenosyl-L-methionine site. Lys164 serves as the catalytic Proton acceptor.

This sequence belongs to the class I-like SAM-binding methyltransferase superfamily. RNA methyltransferase RlmE family.

It localises to the cytoplasm. It carries out the reaction uridine(2552) in 23S rRNA + S-adenosyl-L-methionine = 2'-O-methyluridine(2552) in 23S rRNA + S-adenosyl-L-homocysteine + H(+). Functionally, specifically methylates the uridine in position 2552 of 23S rRNA at the 2'-O position of the ribose in the fully assembled 50S ribosomal subunit. This Shewanella loihica (strain ATCC BAA-1088 / PV-4) protein is Ribosomal RNA large subunit methyltransferase E.